The primary structure comprises 135 residues: Galectin-1 (135 aa).

N-acetylalanine is present on alanine 2. Positions 4-135 (GLVASNLNLK…DFKIKCVAFE (132 aa)) constitute a Galectin domain. N6-acetyllysine is present on residues lysine 13 and lysine 29. Serine 30 is subject to Phosphoserine. A beta-D-galactoside contacts are provided by residues 45-49 (HFNPR), histidine 53, asparagine 62, and 69-72 (WGAE). Residue lysine 108 is modified to N6-acetyllysine; alternate. N6-succinyllysine; alternate is present on lysine 108. N6-acetyllysine is present on lysine 128.

Homodimer. Binds LGALS3BP. Interacts with CD2, CD3, CD4, CD6, CD7, CD43, ALCAM and CD45. Interacts with laminin (via poly-N-acetyllactosamine). Interacts with SUSD2. Interacts with cargo receptor TMED10; the interaction mediates the translocation from the cytoplasm into the ERGIC (endoplasmic reticulum-Golgi intermediate compartment) and thereby secretion.

It localises to the secreted. The protein resides in the extracellular space. Its subcellular location is the extracellular matrix. The protein localises to the cytoplasm. Lectin that binds beta-galactoside and a wide array of complex carbohydrates. Plays a role in regulating apoptosis, cell proliferation and cell differentiation. Inhibits CD45 protein phosphatase activity and therefore the dephosphorylation of Lyn kinase. Strong inducer of T-cell apoptosis. Has hemagglutinating activity towards human erythrocytes. The polypeptide is Galectin-1 (Capra hircus (Goat)).